Here is a 232-residue protein sequence, read N- to C-terminus: Platelet-activating factor acetylhydrolase IB subunit alpha1 (232 aa).

A disordered region spans residues 1-20 (MSGEGENPASKPTPVQDVQG). Ser-2 carries the post-translational modification N-acetylserine. Ser-2 carries the phosphoserine modification. Residues Ser-48, Asp-193, and His-196 contribute to the active site.

Belongs to the 'GDSL' lipolytic enzyme family. Platelet-activating factor acetylhydrolase IB beta/gamma subunits subfamily. As to quaternary structure, forms a catalytic dimer which is either homodimer (alpha1/alpha1 homodimer) or heterodimer with PAFAH1B2 (alpha1/alpha2 heterodimer). Component of the cytosolic (PAF-AH (I)) heterotetrameric enzyme, which is composed of PAFAH1B1 (beta), PAFAH1B2 (alpha2) and PAFAH1B3 (alpha1) subunits. The catalytic activity of the enzyme resides in the alpha1 (PAFAH1B3) and alpha2 (PAFAH1B2) subunits, whereas the beta subunit (PAFAH1B1) has regulatory activity. Trimer formation is not essential for the catalytic activity. Interacts with VLDLR; this interaction may modulate the Reelin pathway. Expressed in brain, spleen, lung, liver, kidney and testis. Not expressed in heart and skeletal muscle. Expressed in fetal brain as heterodimer. Not expressed in adult tissues. Expressed exclusively in granule cells.

The protein resides in the cytoplasm. The enzyme catalyses a 1-O-alkyl-2-acetyl-sn-glycero-3-phosphocholine + H2O = a 1-O-alkyl-sn-glycero-3-phosphocholine + acetate + H(+). It carries out the reaction 1-O-hexadecyl-2-acetyl-sn-glycero-3-phosphocholine + H2O = 1-O-hexadecyl-sn-glycero-3-phosphocholine + acetate + H(+). It catalyses the reaction 1-O-hexadecyl-2-acetyl-sn-glycero-3-phosphate + H2O = 1-O-hexadecyl-sn-glycero-3-phosphate + acetate + H(+). With respect to regulation, beta subunit (PAFAH1B1) inhibits the acetylhydrolase activity of the alpha1/alpha1 catalytic homodimer. Its function is as follows. Alpha1 catalytic subunit of the cytosolic type I platelet-activating factor (PAF) acetylhydrolase (PAF-AH (I)) heterotetrameric enzyme that catalyzes the hydrolyze of the acetyl group at the sn-2 position of PAF and its analogs and modulates the action of PAF. The activity and substrate specificity of PAF-AH (I) are affected by its subunit composition. Both alpha1/alpha1 homodimer (PAFAH1B3/PAFAH1B3 homodimer) and alpha1/alpha2 heterodimer(PAFAH1B3/PAFAH1B2 heterodimer) hydrolyze 1-O-alkyl-2-acetyl-sn-glycero-3-phosphoric acid (AAGPA) more efficiently than PAF, but they have little hydrolytic activity towards 1-O-alkyl-2-acetyl-sn-glycero-3-phosphorylethanolamine (AAGPE). Plays an important role during the development of brain. This is Platelet-activating factor acetylhydrolase IB subunit alpha1 from Rattus norvegicus (Rat).